The sequence spans 571 residues: Septation ring formation regulator EzrA (571 aa).

The Extracellular segment spans residues 1 to 3; it reads MYY. A helical transmembrane segment spans residues 4–22; the sequence is MLIGFIIVVIAVIGAGYIL. Over 23–571 the chain is Cytoplasmic; sequence KRKHYQRINE…ESKVSVDDIE (549 aa). Coiled-coil stretches lie at residues 248 to 298, 326 to 374, 400 to 437, and 478 to 529; these read LAQM…DTLE, DALA…ASGE, KFAE…ERER, and RIAE…ENHF.

The protein belongs to the EzrA family.

Its subcellular location is the cell membrane. Its function is as follows. Negative regulator of FtsZ ring formation; modulates the frequency and position of FtsZ ring formation. Inhibits FtsZ ring formation at polar sites. Interacts either with FtsZ or with one of its binding partners to promote depolymerization. The chain is Septation ring formation regulator EzrA from Listeria monocytogenes serotype 4b (strain CLIP80459).